The primary structure comprises 408 residues: LL-diaminopimelate aminotransferase (408 aa).

Tyr15 and Gly42 together coordinate substrate. Residues Tyr72, 108 to 109, Tyr132, Asn187, Tyr218, and 246 to 248 each bind pyridoxal 5'-phosphate; these read SK and SFS. Substrate contacts are provided by Lys109, Tyr132, and Asn187. Lys249 is subject to N6-(pyridoxal phosphate)lysine. Residues Arg257 and Asn292 each coordinate pyridoxal 5'-phosphate. Residues Asn292 and Arg388 each contribute to the substrate site.

It belongs to the class-I pyridoxal-phosphate-dependent aminotransferase family. LL-diaminopimelate aminotransferase subfamily. As to quaternary structure, homodimer. The cofactor is pyridoxal 5'-phosphate.

The enzyme catalyses (2S,6S)-2,6-diaminopimelate + 2-oxoglutarate = (S)-2,3,4,5-tetrahydrodipicolinate + L-glutamate + H2O + H(+). It participates in amino-acid biosynthesis; L-lysine biosynthesis via DAP pathway; LL-2,6-diaminopimelate from (S)-tetrahydrodipicolinate (aminotransferase route): step 1/1. Functionally, involved in the synthesis of meso-diaminopimelate (m-DAP or DL-DAP), required for both lysine and peptidoglycan biosynthesis. Catalyzes the direct conversion of tetrahydrodipicolinate to LL-diaminopimelate. This chain is LL-diaminopimelate aminotransferase, found in Prochlorococcus marinus subsp. pastoris (strain CCMP1986 / NIES-2087 / MED4).